The chain runs to 263 residues: Cell division coordinator CpoB (263 aa).

A signal peptide spans 1 to 26; the sequence is MSSNFRHQLLSLSLLVGIAAPWAAFA. A coiled-coil region spans residues 44-88; sequence QLERISNAHSQLLTQLQQQLSDNQSDIDSLRGQIQENQYQLNQVV. The segment covering 106–123 has biased composition (low complexity); it reads AAAQSTSGDQSGAAASTT. Positions 106 to 139 are disordered; the sequence is AAAQSTSGDQSGAAASTTPTADAGTANAGAPVKS. TPR repeat units follow at residues 143–176, 180–213, and 217–250; these read NTDY…YPDS, PNAN…YPKS, and ADAM…YPGT.

This sequence belongs to the CpoB family. Homotrimer. Interacts directly with the central domain of TolA and with PBP1B. Binding to TolA disrupts the homotrimer to form a YbgF/TolA heterodimer with weak affinity. Forms a quaternary complex with PBP1B-LpoB and TolA.

Its subcellular location is the periplasm. Functionally, mediates coordination of peptidoglycan synthesis and outer membrane constriction during cell division. Promotes physical and functional coordination of the PBP1B-LpoB and Tol machines, and regulates PBP1B activity in response to Tol energy state. The protein is Cell division coordinator CpoB of Escherichia coli (strain K12).